Here is a 146-residue protein sequence, read N- to C-terminus: uncharacterized protein (146 aa).

Residues 1 to 137 (MLSQEFFNSF…TINVMNQIHE (137 aa)) form the HTH marR-type domain.

This is an uncharacterized protein from Staphylococcus aureus (strain MRSA252).